A 210-amino-acid polypeptide reads, in one-letter code: Protein DrgA (210 aa).

Belongs to the nitroreductase family. The cofactor is FMN.

In terms of biological role, controls resistance to the herbicide Dinoseb and metronidazole. Involved in detoxification of Dinoseb via the reduction of the nitro group(s) and this process is accompanied by the formation of toxic superoxide anions. The sequence is that of Protein DrgA (drgA) from Synechocystis sp. (strain ATCC 27184 / PCC 6803 / Kazusa).